Consider the following 145-residue polypeptide: D-aminoacyl-tRNA deacylase (145 aa).

Positions 137–138 match the Gly-cisPro motif, important for rejection of L-amino acids motif; it reads GP.

It belongs to the DTD family. Homodimer.

It is found in the cytoplasm. The enzyme catalyses glycyl-tRNA(Ala) + H2O = tRNA(Ala) + glycine + H(+). It carries out the reaction a D-aminoacyl-tRNA + H2O = a tRNA + a D-alpha-amino acid + H(+). Functionally, an aminoacyl-tRNA editing enzyme that deacylates mischarged D-aminoacyl-tRNAs. Also deacylates mischarged glycyl-tRNA(Ala), protecting cells against glycine mischarging by AlaRS. Acts via tRNA-based rather than protein-based catalysis; rejects L-amino acids rather than detecting D-amino acids in the active site. By recycling D-aminoacyl-tRNA to D-amino acids and free tRNA molecules, this enzyme counteracts the toxicity associated with the formation of D-aminoacyl-tRNA entities in vivo and helps enforce protein L-homochirality. This chain is D-aminoacyl-tRNA deacylase, found in Salmonella agona (strain SL483).